We begin with the raw amino-acid sequence, 571 residues long: Polypeptide N-acetylgalactosaminyltransferase 2 (571 aa).

The Cytoplasmic portion of the chain corresponds to 1 to 6 (MRRRSR). Residues 7-24 (MLLCFAFLWVLGIAYYMY) traverse the membrane as a helical; Signal-anchor for type II membrane protein segment. Residues 25–571 (SGGGSALAGG…QWKFTLNLQQ (547 aa)) are Lumenal-facing. Ser-29 carries an O-linked (Xyl...) (chondroitin sulfate) serine glycan. Over residues 53-66 (KKDLHHSNGEEKAQ) the composition is skewed to basic and acidic residues. Positions 53 to 74 (KKDLHHSNGEEKAQSMETLPPG) are disordered. Cystine bridges form between Cys-126-Cys-354, Cys-345-Cys-423, Cys-456-Cys-473, and Cys-496-Cys-513. Positions 135–240 (LPATSVVITF…EHWLEPLLER (106 aa)) are catalytic subdomain A. Substrate-binding residues include Thr-143, Asp-176, and Arg-201. Residue Asp-224 participates in Mn(2+) binding. Ser-225 provides a ligand contact to substrate. His-226 is a binding site for Mn(2+). Residues 300–362 (PIKTPMIAGG…PCSRVGHVFR (63 aa)) are catalytic subdomain B. Trp-331 is a binding site for substrate. Residue His-359 participates in Mn(2+) binding. Substrate is bound by residues Arg-362, His-365, and Tyr-367. A Ricin B-type lectin domain is found at 443 to 566 (QDIAFGALQQ…PALSQQWKFT (124 aa)). Ser-536 bears the Phosphoserine mark. A disulfide bridge connects residues Cys-539 and Cys-555.

This sequence belongs to the glycosyltransferase 2 family. GalNAc-T subfamily. Mn(2+) is required as a cofactor. Detected in urine (at protein level). Widely expressed.

It is found in the golgi apparatus. It localises to the golgi stack membrane. The protein localises to the secreted. The enzyme catalyses L-seryl-[protein] + UDP-N-acetyl-alpha-D-galactosamine = a 3-O-[N-acetyl-alpha-D-galactosaminyl]-L-seryl-[protein] + UDP + H(+). The catalysed reaction is L-threonyl-[protein] + UDP-N-acetyl-alpha-D-galactosamine = a 3-O-[N-acetyl-alpha-D-galactosaminyl]-L-threonyl-[protein] + UDP + H(+). It functions in the pathway protein modification; protein glycosylation. Its function is as follows. Catalyzes the initial reaction in O-linked oligosaccharide biosynthesis, the transfer of an N-acetyl-D-galactosamine residue to a serine or threonine residue on the protein receptor. Has a broad spectrum of substrates for peptides such as EA2, Muc5AC, Muc1a, Muc1b. Probably involved in O-linked glycosylation of the immunoglobulin A1 (IgA1) hinge region. Involved in O-linked glycosylation of APOC-III, ANGPTL3 and PLTP. It participates in the regulation of HDL-C metabolism. This chain is Polypeptide N-acetylgalactosaminyltransferase 2 (GALNT2), found in Homo sapiens (Human).